The following is a 390-amino-acid chain: Chorismate synthase 1 (390 aa).

Residues Arg-39 and Arg-45 each contribute to the NADP(+) site. Residues 132 to 134 (RSS), 253 to 254 (NA), Gly-298, 313 to 317 (KPIPT), and Arg-339 contribute to the FMN site.

This sequence belongs to the chorismate synthase family. In terms of assembly, homotetramer. FMNH2 is required as a cofactor.

The catalysed reaction is 5-O-(1-carboxyvinyl)-3-phosphoshikimate = chorismate + phosphate. It functions in the pathway metabolic intermediate biosynthesis; chorismate biosynthesis; chorismate from D-erythrose 4-phosphate and phosphoenolpyruvate: step 7/7. Functionally, catalyzes the anti-1,4-elimination of the C-3 phosphate and the C-6 proR hydrogen from 5-enolpyruvylshikimate-3-phosphate (EPSP) to yield chorismate, which is the branch point compound that serves as the starting substrate for the three terminal pathways of aromatic amino acid biosynthesis. This reaction introduces a second double bond into the aromatic ring system. The sequence is that of Chorismate synthase 1 from Bacillus anthracis.